The primary structure comprises 300 residues: 4-hydroxybenzoate octaprenyltransferase (300 aa).

8 consecutive transmembrane segments (helical) span residues 32–52 (IGTYLLLWPTLWALWLASEGA), 55–75 (LKNLFIFVFGVLLMRSAGCVI), 108–128 (LFGILVGVSFILVLFTNALTI), 149–169 (YLPQVVLGAAFAWGIPMAFAA), 178–198 (AWLLYTATVVWTVAYDTMYAM), 222–242 (AAVAGLQVLTLGVLFMVGAQH), 246–266 (VYYQVSLIIVAVLFVYQQHLI), and 278–298 (FLNNHWVGAAVFLGLVLEFLF).

It belongs to the UbiA prenyltransferase family. Mg(2+) is required as a cofactor.

The protein localises to the cell inner membrane. It catalyses the reaction all-trans-octaprenyl diphosphate + 4-hydroxybenzoate = 4-hydroxy-3-(all-trans-octaprenyl)benzoate + diphosphate. Its pathway is cofactor biosynthesis; ubiquinone biosynthesis. In terms of biological role, catalyzes the prenylation of para-hydroxybenzoate (PHB) with an all-trans polyprenyl group. Mediates the second step in the final reaction sequence of ubiquinone-8 (UQ-8) biosynthesis, which is the condensation of the polyisoprenoid side chain with PHB, generating the first membrane-bound Q intermediate 3-octaprenyl-4-hydroxybenzoate. This chain is 4-hydroxybenzoate octaprenyltransferase, found in Hahella chejuensis (strain KCTC 2396).